The chain runs to 788 residues: Response regulator SSK1 (788 aa).

Residues 534 to 691 enclose the Response regulatory domain; sequence NVLIVEDNII…WLERKVKEWG (158 aa). The residue at position 583 (D583) is a 4-aspartylphosphate.

This sequence belongs to the SSK1 family.

Its subcellular location is the cytoplasm. In terms of biological role, two-domain response regulator protein in the two-component signal transduction system of the HOG1 pathway. Controls high-osmolarity adaptation and fungicide sensitivity via its regulation of the phosphorylation of HOG1. The polypeptide is Response regulator SSK1 (Cochliobolus heterostrophus (strain C5 / ATCC 48332 / race O) (Southern corn leaf blight fungus)).